The primary structure comprises 447 residues: N-succinylarginine dihydrolase (447 aa).

Residues 19 to 28 (AGLSFGNEAS), asparagine 110, and 137 to 138 (HR) each bind substrate. Residue glutamate 174 is part of the active site. Arginine 213 serves as a coordination point for substrate. Histidine 249 is a catalytic residue. Substrate-binding residues include aspartate 251 and asparagine 364. The Nucleophile role is filled by cysteine 370.

Belongs to the succinylarginine dihydrolase family. Homodimer.

The enzyme catalyses N(2)-succinyl-L-arginine + 2 H2O + 2 H(+) = N(2)-succinyl-L-ornithine + 2 NH4(+) + CO2. It functions in the pathway amino-acid degradation; L-arginine degradation via AST pathway; L-glutamate and succinate from L-arginine: step 2/5. Catalyzes the hydrolysis of N(2)-succinylarginine into N(2)-succinylornithine, ammonia and CO(2). The chain is N-succinylarginine dihydrolase from Yersinia enterocolitica serotype O:8 / biotype 1B (strain NCTC 13174 / 8081).